Reading from the N-terminus, the 185-residue chain is Large ribosomal subunit protein uL5 (185 aa).

The protein belongs to the universal ribosomal protein uL5 family. In terms of assembly, part of the 50S ribosomal subunit; part of the 5S rRNA/L5/L18/L25 subcomplex. Contacts the 5S rRNA and the P site tRNA. Forms a bridge to the 30S subunit in the 70S ribosome.

This is one of the proteins that bind and probably mediate the attachment of the 5S RNA into the large ribosomal subunit, where it forms part of the central protuberance. In the 70S ribosome it contacts protein S13 of the 30S subunit (bridge B1b), connecting the 2 subunits; this bridge is implicated in subunit movement. Contacts the P site tRNA; the 5S rRNA and some of its associated proteins might help stabilize positioning of ribosome-bound tRNAs. The polypeptide is Large ribosomal subunit protein uL5 (Xanthobacter autotrophicus (strain ATCC BAA-1158 / Py2)).